Reading from the N-terminus, the 89-residue chain is Small ribosomal subunit protein uS15 (89 aa).

This sequence belongs to the universal ribosomal protein uS15 family. As to quaternary structure, part of the 30S ribosomal subunit. Forms a bridge to the 50S subunit in the 70S ribosome, contacting the 23S rRNA.

Functionally, one of the primary rRNA binding proteins, it binds directly to 16S rRNA where it helps nucleate assembly of the platform of the 30S subunit by binding and bridging several RNA helices of the 16S rRNA. In terms of biological role, forms an intersubunit bridge (bridge B4) with the 23S rRNA of the 50S subunit in the ribosome. In Frankia alni (strain DSM 45986 / CECT 9034 / ACN14a), this protein is Small ribosomal subunit protein uS15.